A 95-amino-acid chain; its full sequence is Acyl carrier protein AcpXL (95 aa).

In terms of domain architecture, Carrier spans 4–90 (TATFDKVADI…NLCAKIDELR (87 aa)). The residue at position 39 (Ser-39) is an O-(pantetheine 4'-phosphoryl)serine.

4'-phosphopantetheine is transferred from CoA to a specific serine of apo-ACP by AcpS. This modification is essential for activity because fatty acids are bound in thioester linkage to the sulfhydryl of the prosthetic group.

It localises to the cytoplasm. It participates in glycolipid biosynthesis; KDO(2)-lipid A biosynthesis. Carrier of the growing fatty acid chain in fatty acid biosynthesis. Is involved in the transfer of long hydroxylated fatty acids to lipid A. The polypeptide is Acyl carrier protein AcpXL (acpXL) (Rhizobium meliloti (strain 1021) (Ensifer meliloti)).